The primary structure comprises 688 residues: MAKIRVYELAKELNISSKELITLLEEEFSVEVKNHMSAIEDEDANLIKELLSGKEKSEKTKEEDDEIETTAKNPIKESMNNKKSNKRDDKNEKVNTENAEDMGIITMTSDTITVKEISDKLEKSYAEVIKELMLMGVMASVNQEINFEMAEKLAAKFDMEILKEDEDEKEDLEDILKDNEEEEYLQKRSPIITVMGHVDHGKTSLLDAIRKSKVTSTEAGGITQHIGAYTVELNGEAITFLDTPGHAAFTAMRARGAQVTDIVILVVAADDGIMPQTQEAISHCKAANVPLIVAINKIDRPGANIDKVKQELTEYGLVAEDWGGDTICVPVSAHTKEGIDDLLEMILLSSEILELKANPNRKAKGTVVEAKLDKGRGPVATLLIQNGTLRVGDSIVVGSTYGRIRAMFNDKGRNIESAGPSTPVEILGLSEVPEAGDKFYQTKEEKTARGIADKRKEKIRDEYLQSTHKVSLEDLYNQIQEGTVKELGLIVKADVQGSVEALKQSLEKLSTEEVKVRVIHGGVGAINETDVTLATASNGIILGFNVRPDNNAIIASERDGVDIKTYRIIYDAIEDIKSAMVGMLEPEFKEVVIGTAEVRQVYKISSVGTIAGAYIQTGKLARNAGARVIRDGIVIFESELASLKRFKDDAKEVAQGYECGLSIEKFNDIKEGDIIECFIMEEIKKKTL.

Basic and acidic residues-rich tracts occupy residues 53–62 (GKEKSEKTKE) and 86–95 (KRDDKNEKVN). The disordered stretch occupies residues 53 to 100 (GKEKSEKTKEEDDEIETTAKNPIKESMNNKKSNKRDDKNEKVNTENAE). One can recognise a tr-type G domain in the interval 187–354 (KRSPIITVMG…MILLSSEILE (168 aa)). Residues 196–203 (GHVDHGKT) form a G1 region. 196-203 (GHVDHGKT) serves as a coordination point for GTP. The segment at 221 to 225 (GITQH) is G2. Residues 242-245 (DTPG) form a G3 region. GTP is bound by residues 242-246 (DTPGH) and 296-299 (NKID). The tract at residues 296 to 299 (NKID) is G4. Positions 332–334 (SAH) are G5.

Belongs to the TRAFAC class translation factor GTPase superfamily. Classic translation factor GTPase family. IF-2 subfamily.

The protein resides in the cytoplasm. Functionally, one of the essential components for the initiation of protein synthesis. Protects formylmethionyl-tRNA from spontaneous hydrolysis and promotes its binding to the 30S ribosomal subunits. Also involved in the hydrolysis of GTP during the formation of the 70S ribosomal complex. This is Translation initiation factor IF-2 from Clostridium botulinum (strain Loch Maree / Type A3).